Consider the following 98-residue polypeptide: NADH-ubiquinone oxidoreductase chain 4L (98 aa).

A run of 3 helical transmembrane segments spans residues 1–21 (MSLV…GLLM), 29–49 (SLLC…LMIL), and 61–81 (IILL…LVMV).

This sequence belongs to the complex I subunit 4L family. Core subunit of respiratory chain NADH dehydrogenase (Complex I) which is composed of 45 different subunits.

It localises to the mitochondrion inner membrane. It catalyses the reaction a ubiquinone + NADH + 5 H(+)(in) = a ubiquinol + NAD(+) + 4 H(+)(out). Functionally, core subunit of the mitochondrial membrane respiratory chain NADH dehydrogenase (Complex I) which catalyzes electron transfer from NADH through the respiratory chain, using ubiquinone as an electron acceptor. Part of the enzyme membrane arm which is embedded in the lipid bilayer and involved in proton translocation. The protein is NADH-ubiquinone oxidoreductase chain 4L (MT-ND4L) of Pantholops hodgsonii (Chiru).